A 290-amino-acid chain; its full sequence is Type II restriction enzyme MjaIII (290 aa).

Belongs to the DpnII type II restriction endonuclease family.

The enzyme catalyses Endonucleolytic cleavage of DNA to give specific double-stranded fragments with terminal 5'-phosphates.. A P subtype restriction enzyme that recognizes the double-stranded sequence 5'-GATC-3'; the cleavage site is unknown. This Methanocaldococcus jannaschii (strain ATCC 43067 / DSM 2661 / JAL-1 / JCM 10045 / NBRC 100440) (Methanococcus jannaschii) protein is Type II restriction enzyme MjaIII (mjaIIIR).